The primary structure comprises 207 residues: Ribonuclease HII (207 aa).

Positions 17 to 207 (RIVAGVDEVG…SFKPLAAFVD (191 aa)) constitute an RNase H type-2 domain. Asp23, Glu24, and Asp120 together coordinate a divalent metal cation.

It belongs to the RNase HII family. Mn(2+) serves as cofactor. Requires Mg(2+) as cofactor.

Its subcellular location is the cytoplasm. The catalysed reaction is Endonucleolytic cleavage to 5'-phosphomonoester.. Its function is as follows. Endonuclease that specifically degrades the RNA of RNA-DNA hybrids. In Herpetosiphon aurantiacus (strain ATCC 23779 / DSM 785 / 114-95), this protein is Ribonuclease HII.